Consider the following 389-residue polypeptide: MLSFDYSIPTKVFFGKGKIDVIGEEIKKYGSRVLIVYGGGSIKRNGIYDRATAILKENNIAFYELSGVEPNPRITTVKKGIEICRENNVDLVLAIGGGSAIDCSKVIAAGVYYDGDTWDMVKDPSKITKVLPIASILTLSATGSEMDQIAVISNMETNEKLGVGHDDMRPKFSVLDPTYTFTVPKNQTAAGTADIMSHTFESYFSGVEGAYVQDGIAEAILRTCIKYGKIAMEKTDDYEARANLMWASSLAINGLLSLGKDRKWSCHPMEHELSAYYDITHGVGLAILTPNWMEYILNDDTLHKFVSYGINVWGIDKNKDNYEIAREAIKNTREYFNSLGIPSKLREVGIGKDKLELMAKQAVRNSGGTIGSLRPINAEDVLEIFKKSY.

Belongs to the iron-containing alcohol dehydrogenase family. As to quaternary structure, homodimer.

It functions in the pathway alcohol metabolism; butanol biosynthesis. The sequence is that of NADH-dependent butanol dehydrogenase A (bdhA) from Clostridium acetobutylicum (strain ATCC 824 / DSM 792 / JCM 1419 / IAM 19013 / LMG 5710 / NBRC 13948 / NRRL B-527 / VKM B-1787 / 2291 / W).